The chain runs to 396 residues: Ribosomal RNA large subunit methyltransferase I (396 aa).

Positions 2–79 constitute a PUA domain; that stretch reads AIRIKLKPGR…REEEIDREFF (78 aa).

This sequence belongs to the methyltransferase superfamily. RlmI family.

It is found in the cytoplasm. It catalyses the reaction cytidine(1962) in 23S rRNA + S-adenosyl-L-methionine = 5-methylcytidine(1962) in 23S rRNA + S-adenosyl-L-homocysteine + H(+). Specifically methylates the cytosine at position 1962 (m5C1962) of 23S rRNA. The sequence is that of Ribosomal RNA large subunit methyltransferase I from Shewanella baltica (strain OS155 / ATCC BAA-1091).